The following is a 190-amino-acid chain: Superoxide dismutase [Fe] (190 aa).

Positions 27, 75, 156, and 160 each coordinate Fe cation.

This sequence belongs to the iron/manganese superoxide dismutase family. In terms of assembly, homodimer. Fe cation is required as a cofactor.

The catalysed reaction is 2 superoxide + 2 H(+) = H2O2 + O2. Functionally, destroys superoxide anion radicals which are normally produced within the cells and which are toxic to biological systems. The protein is Superoxide dismutase [Fe] (SODB) of Entamoeba histolytica (strain ATCC 30459 / HM-1:IMSS / ABRM).